The chain runs to 466 residues: Vimentin (466 aa).

Composition is skewed to low complexity over residues 1–13 (MSTR…SYRR) and 20–33 (TSSR…YVTT). A disordered region spans residues 1–33 (MSTRSVSSSSYRRMFGGSGTSSRPSSNRSYVTT). S2 is subject to N-acetylserine. A head region spans residues 2 to 95 (STRSVSSSSY…FSLADAINTE (94 aa)). The residue at position 5 (S5) is a Phosphoserine. Phosphoserine; by PKA and PKC; alternate is present on S7. S7 carries an O-linked (GlcNAc) serine; alternate glycan. S8 bears the Phosphoserine mark. Residues S9 and S10 each carry the phosphoserine; by PKC modification. T20 is modified (phosphothreonine). S21 carries the phosphoserine; by PKC modification. Phosphoserine; by PKA and PKC is present on S25. Residue S26 is modified to Phosphoserine; by PKC. T33 carries an O-linked (GlcNAc) threonine glycan. A glycan (O-linked (GlcNAc) serine; alternate) is linked at S34. S34 carries the phosphoserine; by PKC; alternate modification. A Phosphoserine; by CaMK2, PKA, PKC and ROCK2 modification is found at S39. S42 carries the post-translational modification Phosphoserine; by PKC. S47 carries the phosphoserine; by PKA modification. S49 bears the Phosphoserine mark. At S51 the chain carries Phosphoserine; by PKA and PKC. The residue at position 53 (Y53) is a Phosphotyrosine. A phosphoserine mark is found at S55 and S56. Y61 is subject to Phosphotyrosine. A Phosphoserine; by PKA and PKC modification is found at S66. Residue S72 is modified to Phosphoserine; by AURKB and ROCK2. S73 carries the post-translational modification Phosphoserine. A Phosphoserine; by CaMK2 modification is found at S83. The residue at position 87 (S87) is a Phosphoserine. Positions 96-131 (FKNTRTNEKVELQELNDRFANYIDKVRFLEQQNKIL) are coil 1A. Residues 96 to 131 (FKNTRTNEKVELQELNDRFANYIDKVRFLEQQNKIL) adopt a coiled-coil conformation. The IF rod domain maps to 103–411 (EKVELQELND…KLLEGEESRI (309 aa)). Residue K104 forms a Glycyl lysine isopeptide (Lys-Gly) (interchain with G-Cter in SUMO2) linkage. Y117 is modified (phosphotyrosine). N6-acetyllysine; alternate is present on residues K120, K129, and K139. N6-succinyllysine; alternate is present on residues K120 and K129. Glycyl lysine isopeptide (Lys-Gly) (interchain with G-Cter in SUMO2); alternate cross-links involve residues K120, K129, and K139. The linker 1 stretch occupies residues 132 to 153 (LAELEQLKGQGKSRLGDLYEEE). S144 carries the post-translational modification Phosphoserine. Residues 154 to 245 (MRELRRQVDQ…KLHDEEIQEL (92 aa)) adopt a coiled-coil conformation. The interval 154–245 (MRELRRQVDQ…KLHDEEIQEL (92 aa)) is coil 1B. K168 bears the N6-acetyllysine mark. K188 carries the post-translational modification N6-acetyllysine; alternate. At K188 the chain carries N6-succinyllysine; alternate. Phosphoserine is present on S214. K223 carries the N6-acetyllysine; alternate modification. Residue K223 forms a Glycyl lysine isopeptide (Lys-Gly) (interchain with G-Cter in SUMO2); alternate linkage. Phosphoserine is present on S226. K235 bears the N6-acetyllysine mark. A linker 12 region spans residues 246 to 268 (QAQIQEQHVQIDVDVSKPDLTAA). Residue K262 forms a Glycyl lysine isopeptide (Lys-Gly) (interchain with G-Cter in SUMO2) linkage. A coil 2 region spans residues 269 to 407 (LRDVRQQYES…ATYRKLLEGE (139 aa)). Position 294 is an N6-acetyllysine; alternate (K294). An N6-succinyllysine; alternate modification is found at K294. K294 is covalently cross-linked (Glycyl lysine isopeptide (Lys-Gly) (interchain with G-Cter in SUMO2); alternate). S299 carries the phosphoserine modification. A coiled-coil region spans residues 303-407 (NRNNDALRQA…ATYRKLLEGE (105 aa)). Residue K313 forms a Glycyl lysine isopeptide (Lys-Gly) (interchain with G-Cter in SUMO2) linkage. S325 carries the post-translational modification Phosphoserine. Residues 326-329 (LTCE) carry the [IL]-x-C-x-x-[DE] motif motif. K373 is subject to N6-acetyllysine; alternate. K373 participates in a covalent cross-link: Glycyl lysine isopeptide (Lys-Gly) (interchain with G-Cter in SUMO2); alternate. The interval 408-466 (ESRISLPLPTFSSLNLRETNLESLPLVDTHSKRTLLIKTVETRDGQVINETSQHHDDLE) is tail. 4 positions are modified to phosphoserine: S409, S412, S419, and S420. T426 carries the phosphothreonine modification. S430 bears the Phosphoserine mark. T436 is subject to Phosphothreonine. S438 is modified (phosphoserine). A Glycyl lysine isopeptide (Lys-Gly) (interchain with G-Cter in SUMO2) cross-link involves residue K439. N6-acetyllysine; alternate is present on K445. K445 carries the N6-succinyllysine; alternate modification. K445 participates in a covalent cross-link: Glycyl lysine isopeptide (Lys-Gly) (interchain with G-Cter in SUMO2); alternate. A Glycyl lysine isopeptide (Lys-Gly) (interchain with G-Cter in SUMO1); alternate cross-link involves residue K445. 2 positions are modified to phosphothreonine: T446 and T458. The residue at position 459 (S459) is a Phosphoserine.

The protein belongs to the intermediate filament family. Homomer assembled from elementary dimers. Identified in complexes that contain VIM, EZR, AHNAK, BFSP1, BFSP2, ANK2, PLEC, PRX and spectrin. Interacts with BCAS3. Interacts with LGSN. Interacts with SYNM. Interacts (via rod region) with PLEC (via CH 1 domain). Interacts with PLEC isoform 1C. Interacts with STK33. Interacts with LARP6. Interacts with RAB8B. Interacts with TOR1A; the interaction associates TOR1A with the cytoskeleton. Interacts with TOR1AIP1. Interacts with DIAPH1. Interacts with EPPK1; interaction is dependent of higher-order structure of intermediate filament. Interacts with the non-receptor tyrosine kinase SRMS; the interaction leads to phosphorylation of VIM. Interacts with NOD2. Interacts (via head region) with CORO1C. Interacts with HDGF. Interacts with PRKCE (via phorbol-ester/DAG-type 2 domain). Interacts with BFSP2. Interacts with PPL. Interacts with PKP1 and PKP2. Interacts with SCRIB (via PDZ domains); the interaction protects SCRIB from proteasomal degradation and facilitates SCRIB localization to intermediate filaments, the interaction is reduced by cell contact inhibition. In terms of processing, phosphorylation by PKN1 inhibits the formation of filaments. Filament disassembly during mitosis is promoted by phosphorylation at Ser-55 as well as by nestin. One of the most prominent phosphoproteins in various cells of mesenchymal origin. Phosphorylation is enhanced during cell division, at which time vimentin filaments are significantly reorganized. Phosphorylated at Ser-56 by CDK5 during neutrophil secretion in the cytoplasm. Phosphorylated by STK33. Phosphorylated on tyrosine residues by SRMS. S-nitrosylation is induced by interferon-gamma and oxidatively-modified low-densitity lipoprotein (LDL(ox)) possibly implicating the iNOS-S100A8/9 transnitrosylase complex. In terms of tissue distribution, detected in eye lens fiber cells (at protein level). Expressed in retinal lens epithelial cells (at protein level). Expressed in Langerhans cells in the epidermis (at protein level).

Its subcellular location is the cytoplasm. It is found in the cytoskeleton. It localises to the nucleus matrix. The protein localises to the cell membrane. In terms of biological role, vimentins are class-III intermediate filaments found in various non-epithelial cells, especially mesenchymal cells. Vimentin is attached to the nucleus, endoplasmic reticulum, and mitochondria, either laterally or terminally. Plays a role in cell directional movement, orientation, cell sheet organization and Golgi complex polarization at the cell migration front. Protects SCRIB from proteasomal degradation and facilitates its localization to intermediate filaments in a cell contact-mediated manner. Its function is as follows. Involved with LARP6 in the stabilization of type I collagen mRNAs for CO1A1 and CO1A2. This chain is Vimentin, found in Mus musculus (Mouse).